A 30-amino-acid polypeptide reads, in one-letter code: Putative UPF0377 protein YNR075C-A (30 aa).

The protein belongs to the UPF0377 family.

This chain is Putative UPF0377 protein YNR075C-A, found in Saccharomyces cerevisiae (strain ATCC 204508 / S288c) (Baker's yeast).